Here is a 274-residue protein sequence, read N- to C-terminus: Ribosomal RNA small subunit methyltransferase A (274 aa).

Residues N17, L19, G44, E65, D89, and N111 each coordinate S-adenosyl-L-methionine.

Belongs to the class I-like SAM-binding methyltransferase superfamily. rRNA adenine N(6)-methyltransferase family. RsmA subfamily.

Its subcellular location is the cytoplasm. The catalysed reaction is adenosine(1518)/adenosine(1519) in 16S rRNA + 4 S-adenosyl-L-methionine = N(6)-dimethyladenosine(1518)/N(6)-dimethyladenosine(1519) in 16S rRNA + 4 S-adenosyl-L-homocysteine + 4 H(+). Its function is as follows. Specifically dimethylates two adjacent adenosines (A1518 and A1519) in the loop of a conserved hairpin near the 3'-end of 16S rRNA in the 30S particle. May play a critical role in biogenesis of 30S subunits. The chain is Ribosomal RNA small subunit methyltransferase A from Buchnera aphidicola subsp. Schizaphis graminum (strain Sg).